The sequence spans 968 residues: AP2-associated protein kinase 1 (968 aa).

Residue Met1 is modified to N-acetylmethionine. Over residues 1-11 (MKKFFDSRREQ) the composition is skewed to basic and acidic residues. The disordered stretch occupies residues 1 to 25 (MKKFFDSRREQGGSGLGSGSSGGGG). Over residues 12 to 25 (GGSGLGSGSSGGGG) the composition is skewed to gly residues. Position 14 is a phosphoserine (Ser14). The 270-residue stretch at 46–315 (VTVDEVLAEG…QVSFFSFKLL (270 aa)) folds into the Protein kinase domain. ATP contacts are provided by residues 52 to 60 (LAEGGFAIV) and Lys74. Asp176 serves as the catalytic Proton acceptor. A Phosphotyrosine modification is found at Tyr234. Ser235 is modified (phosphoserine). Disordered regions lie at residues 327 to 485 (SPIP…AQAP) and 578 to 640 (IQPP…AGHR). Residues Thr354 and Thr389 each carry the phosphothreonine modification. At Arg391 the chain carries Omega-N-methylarginine. Over residues 437–448 (QAPPAPQQPPSA) the composition is skewed to pro residues. Composition is skewed to low complexity over residues 449-472 (PAQG…LKQQ) and 578-589 (IQPPQAQPATAS). At Thr613 the chain carries Phosphothreonine. Ser625 is subject to Phosphoserine. Phosphothreonine is present on Thr627. Phosphoserine is present on residues Ser630, Ser631, Ser644, and Ser657. Thr660 carries the post-translational modification Phosphothreonine. Residues 671-708 (SLNKSKSATTTPSGSPRASQQNVYNPSEGSTWNPFDDD) form a disordered region. Residues 679-703 (TTTPSGSPRASQQNVYNPSEGSTWN) are compositionally biased toward polar residues. A Phosphotyrosine modification is found at Tyr694. 4 positions are modified to phosphoserine: Ser738, Ser853, Ser944, and Ser945. A clathrin-binding domain (CBD) region spans residues 830–967 (EKADVAVESL…SLLLVDQLID (138 aa)). Disordered stretches follow at residues 843–862 (LEPP…ASNR) and 929–952 (PVLI…ESSL). Polar residues predominate over residues 851–862 (LPSQTESVASNR). A compositionally biased stretch (low complexity) spans 938–951 (GGHSRNSSGSSESS).

The protein belongs to the protein kinase superfamily. Ser/Thr protein kinase family. In terms of assembly, interacts (via CBD domain) with clathrin. Interacts with AP-2 complex. Interacts with NUMB. Interacts with alpha-adaptin. Interacts with EPS15. Interacts with membrane-bound activated NOTCH1 but not with the inactive full-length form of NOTCH1. Preferentially interacts with monoubiquitinated activated NOTCH1 compared to the non-ubiquitinated form. In terms of processing, autophosphorylated.

It localises to the cell membrane. Its subcellular location is the membrane. The protein resides in the clathrin-coated pit. The protein localises to the presynapse. The catalysed reaction is L-seryl-[protein] + ATP = O-phospho-L-seryl-[protein] + ADP + H(+). It carries out the reaction L-threonyl-[protein] + ATP = O-phospho-L-threonyl-[protein] + ADP + H(+). Stimulated by clathrin. Its function is as follows. Regulates clathrin-mediated endocytosis by phosphorylating the AP2M1/mu2 subunit of the adaptor protein complex 2 (AP-2) which ensures high affinity binding of AP-2 to cargo membrane proteins during the initial stages of endocytosis. Preferentially, may phosphorylate substrates on threonine residues. Regulates phosphorylation of other AP-2 subunits as well as AP-2 localization and AP-2-mediated internalization of ligand complexes. Phosphorylates NUMB and regulates its cellular localization, promoting NUMB localization to endosomes. Binds to and stabilizes the activated form of NOTCH1, increases its localization in endosomes and regulates its transcriptional activity. The chain is AP2-associated protein kinase 1 (AAK1) from Sus scrofa (Pig).